Consider the following 160-residue polypeptide: Sec-independent protein translocase protein TatB (160 aa).

The chain crosses the membrane as a helical span at residues 1–21 (MFGMGFFEILVVLVVAIIFLG). The segment at 118–160 (HLNEEVSNEEALNKEVSSDESPKEVQLATDNNTKEHDKEKENV) is disordered. Basic and acidic residues-rich tracts occupy residues 128–140 (ALNK…ESPK) and 149–160 (NTKEHDKEKENV).

It belongs to the TatB family. The Tat system comprises two distinct complexes: a TatABC complex, containing multiple copies of TatA, TatB and TatC subunits, and a separate TatA complex, containing only TatA subunits. Substrates initially bind to the TatABC complex, which probably triggers association of the separate TatA complex to form the active translocon.

It is found in the cell inner membrane. Functionally, part of the twin-arginine translocation (Tat) system that transports large folded proteins containing a characteristic twin-arginine motif in their signal peptide across membranes. Together with TatC, TatB is part of a receptor directly interacting with Tat signal peptides. TatB may form an oligomeric binding site that transiently accommodates folded Tat precursor proteins before their translocation. In Helicobacter pylori (strain ATCC 700392 / 26695) (Campylobacter pylori), this protein is Sec-independent protein translocase protein TatB.